The chain runs to 115 residues: NADH-ubiquinone oxidoreductase chain 3 (115 aa).

3 consecutive transmembrane segments (helical) span residues 3–23 (LFIM…LNLL), 55–75 (FFMV…LLPL), and 87–107 (TITW…YEWL).

Belongs to the complex I subunit 3 family.

Its subcellular location is the mitochondrion membrane. The enzyme catalyses a ubiquinone + NADH + 5 H(+)(in) = a ubiquinol + NAD(+) + 4 H(+)(out). Functionally, core subunit of the mitochondrial membrane respiratory chain NADH dehydrogenase (Complex I) that is believed to belong to the minimal assembly required for catalysis. Complex I functions in the transfer of electrons from NADH to the respiratory chain. The immediate electron acceptor for the enzyme is believed to be ubiquinone. This Alligator mississippiensis (American alligator) protein is NADH-ubiquinone oxidoreductase chain 3 (MT-ND3).